A 163-amino-acid polypeptide reads, in one-letter code: Large ribosomal subunit protein uL10 (163 aa).

It belongs to the universal ribosomal protein uL10 family. As to quaternary structure, part of the ribosomal stalk of the 50S ribosomal subunit. The N-terminus interacts with L11 and the large rRNA to form the base of the stalk. The C-terminus forms an elongated spine to which L12 dimers bind in a sequential fashion forming a multimeric L10(L12)X complex.

Functionally, forms part of the ribosomal stalk, playing a central role in the interaction of the ribosome with GTP-bound translation factors. This chain is Large ribosomal subunit protein uL10, found in Histophilus somni (strain 2336) (Haemophilus somnus).